Consider the following 697-residue polypeptide: SPX domain-containing membrane protein At1g63010 (697 aa).

Positions 2-145 constitute an SPX domain; that stretch reads VAFGKYLQRK…GYRFADYYVK (144 aa). 6 helical membrane passes run 247 to 267, 278 to 298, 315 to 335, 337 to 356, 375 to 395, and 411 to 431; these read FNSL…TYII, LGAA…AQVF, LVFS…AYDA, SIAL…ARAV, AGFV…AGLL, and LPGW…CISF. The disordered stretch occupies residues 439-459; sequence EDGEKNNRNETTSDRVESSRV. The next 5 helical transmembrane spans lie at 513-533, 544-564, 576-596, 604-624, and 670-690; these read LLIY…SSVI, SVAI…ILVG, ILLT…NLFV, VISG…NLSL, and LLNA…VATC.

Belongs to the major facilitator superfamily.

It is found in the membrane. In Arabidopsis thaliana (Mouse-ear cress), this protein is SPX domain-containing membrane protein At1g63010.